A 572-amino-acid polypeptide reads, in one-letter code: Squalene monooxygenase (572 aa).

The Cytoplasmic portion of the chain corresponds to 1–19 (MWTFLGIATFTYFYKKCGD). Positions 1-98 (MWTFLGIATF…EQLESKKCRK (98 aa)) are interaction with MARCHF6. The stretch at 20–40 (VTLANKELLLCVLVFLSLGLV) is an intramembrane region. Over 41–572 (LSYRCRHRHG…IYSEMKYLVH (532 aa)) the chain is Cytoplasmic. Positions 61-72 (QFAAFSDILSAL) are required for degradation in response to high membrane cholesterol levels. The tract at residues 116–572 (TSFVTDPEVI…IYSEMKYLVH (457 aa)) is sufficient for enzyme activity. FAD-binding positions include 131 to 132 (VL), 151 to 152 (ER), Arg-159, Arg-232, Val-248, Asp-406, and Met-419. A hydrophobic; mediates interaction with membranes region spans residues 514–572 (PLVLIRHFFSVAIYATYFCFKSEPWATKPRALFSSGAVLYKACSILFPLIYSEMKYLVH).

It belongs to the squalene monooxygenase family. In terms of assembly, interacts (via N-terminal domain) with MARCHF6. Interacts with SMIM22; this interaction modulates lipid droplet formation. FAD is required as a cofactor. Post-translationally, ubiquitinated by MARCHF6 in response to high cholesterol levels in intracellular membranes, leading to proteasomal degradation. As to expression, detected in liver.

It localises to the microsome membrane. It is found in the endoplasmic reticulum membrane. The enzyme catalyses squalene + reduced [NADPH--hemoprotein reductase] + O2 = (S)-2,3-epoxysqualene + oxidized [NADPH--hemoprotein reductase] + H2O + H(+). Its pathway is terpene metabolism; lanosterol biosynthesis; lanosterol from farnesyl diphosphate: step 2/3. In terms of biological role, catalyzes the stereospecific oxidation of squalene to (S)-2,3-epoxysqualene, and is considered to be a rate-limiting enzyme in steroid biosynthesis. The protein is Squalene monooxygenase (Sqle) of Mus musculus (Mouse).